A 149-amino-acid polypeptide reads, in one-letter code: Probable flagellum biosynthesis repressor protein FlbT (149 aa).

It belongs to the FlbT family.

In terms of biological role, has a post-transcriptional repressor function in flagellum biogenesis. Associates with the 5'-UTR of fljK mRNA and promotes its degradation. This Agrobacterium fabrum (strain C58 / ATCC 33970) (Agrobacterium tumefaciens (strain C58)) protein is Probable flagellum biosynthesis repressor protein FlbT.